A 79-amino-acid polypeptide reads, in one-letter code: Defensin-1 (79 aa).

Residues 1-23 form the signal peptide; sequence MKFLNVVAIALLVVACLAVYSNA. 3 disulfide bridges follow: C42-C69, C55-C75, and C59-C77.

It belongs to the invertebrate defensin family. Type 1 subfamily.

Its subcellular location is the secreted. The chain is Defensin-1 (SMD1) from Stomoxys calcitrans (Stable fly).